The chain runs to 194 residues: Probable nicotinate-nucleotide adenylyltransferase (194 aa).

The protein belongs to the NadD family.

It carries out the reaction nicotinate beta-D-ribonucleotide + ATP + H(+) = deamido-NAD(+) + diphosphate. It functions in the pathway cofactor biosynthesis; NAD(+) biosynthesis; deamido-NAD(+) from nicotinate D-ribonucleotide: step 1/1. In terms of biological role, catalyzes the reversible adenylation of nicotinate mononucleotide (NaMN) to nicotinic acid adenine dinucleotide (NaAD). The chain is Probable nicotinate-nucleotide adenylyltransferase from Brucella suis biovar 1 (strain 1330).